A 280-amino-acid polypeptide reads, in one-letter code: MNLVAALVLCFALLSSVRGDDTTNTIDHDQVKPFPQPEPVTISEKAAVKYKPQLEIGDGCVSFPAVNAAGEITGGLKGTKDTEACTEAPLGSQVYGRSTWFQDKWAMMYSWYFPKNFCAYKAAGRHDWANVVIWIDNPAAENVTFLGASLSQQTLEPIKLAILPMGTRNEEPYQNQKAIPMMAFAGAERITTGRVGRWSYTYKYVAGSNTTMRFSHSYPGTWGWIDMTFADSDGESQDLIMWNQLTDKARAALESADFGDTQVPFTDKNFDTNLQAAWPF.

An N-terminal signal peptide occupies residues 1–19; the sequence is MNLVAALVLCFALLSSVRG. The Hepta-peptide GHRHDWE motif motif lies at 123-129; that stretch reads AGRHDWA. N-linked (GlcNAc...) asparagine glycans are attached at residues asparagine 142 and asparagine 209.

This sequence belongs to the Necrosis inducing protein (NPP1) family.

The protein resides in the secreted. Its function is as follows. Secreted effector that contributes strongly to virulence during infection by P.capsici. This chain is NLP effector protein Pc553546, found in Phytophthora capsici.